The primary structure comprises 190 residues: Probable nicotinate-nucleotide adenylyltransferase (190 aa).

It belongs to the NadD family.

The catalysed reaction is nicotinate beta-D-ribonucleotide + ATP + H(+) = deamido-NAD(+) + diphosphate. Its pathway is cofactor biosynthesis; NAD(+) biosynthesis; deamido-NAD(+) from nicotinate D-ribonucleotide: step 1/1. Catalyzes the reversible adenylation of nicotinate mononucleotide (NaMN) to nicotinic acid adenine dinucleotide (NaAD). This chain is Probable nicotinate-nucleotide adenylyltransferase, found in Borrelia turicatae (strain 91E135).